Consider the following 123-residue polypeptide: Large ribosomal subunit protein uL14 (123 aa).

The protein belongs to the universal ribosomal protein uL14 family. In terms of assembly, part of the 50S ribosomal subunit. Forms a cluster with proteins L3 and L19. In the 70S ribosome, L14 and L19 interact and together make contacts with the 16S rRNA in bridges B5 and B8.

Functionally, binds to 23S rRNA. Forms part of two intersubunit bridges in the 70S ribosome. This chain is Large ribosomal subunit protein uL14, found in Koribacter versatilis (strain Ellin345).